Consider the following 92-residue polypeptide: Small ribosomal subunit protein uS19 (92 aa).

It belongs to the universal ribosomal protein uS19 family.

In terms of biological role, protein S19 forms a complex with S13 that binds strongly to the 16S ribosomal RNA. This chain is Small ribosomal subunit protein uS19, found in Bifidobacterium longum subsp. infantis (strain ATCC 15697 / DSM 20088 / JCM 1222 / NCTC 11817 / S12).